The chain runs to 345 residues: Mannonate dehydratase 2 (345 aa).

This sequence belongs to the mannonate dehydratase family. It depends on Fe(2+) as a cofactor. Mn(2+) is required as a cofactor.

It carries out the reaction D-mannonate = 2-dehydro-3-deoxy-D-gluconate + H2O. Its pathway is carbohydrate metabolism; pentose and glucuronate interconversion. Its function is as follows. Catalyzes the dehydration of D-mannonate. The protein is Mannonate dehydratase 2 (uxuA2) of Halalkalibacterium halodurans (strain ATCC BAA-125 / DSM 18197 / FERM 7344 / JCM 9153 / C-125) (Bacillus halodurans).